Consider the following 246-residue polypeptide: Flagellar L-ring protein (246 aa).

An N-terminal signal peptide occupies residues 1–20 (MMQKCLSPKTLIAALVVLSA). C21 carries N-palmitoyl cysteine lipidation. A lipid anchor (S-diacylglycerol cysteine) is attached at C21.

Belongs to the FlgH family. In terms of assembly, the basal body constitutes a major portion of the flagellar organelle and consists of four rings (L,P,S, and M) mounted on a central rod.

The protein resides in the cell outer membrane. It localises to the bacterial flagellum basal body. Functionally, assembles around the rod to form the L-ring and probably protects the motor/basal body from shearing forces during rotation. In Ruegeria pomeroyi (strain ATCC 700808 / DSM 15171 / DSS-3) (Silicibacter pomeroyi), this protein is Flagellar L-ring protein.